The chain runs to 735 residues: Photosystem I P700 chlorophyll a apoprotein A2 (735 aa).

The next 8 helical transmembrane spans lie at 47–70, 136–159, 176–200, 274–292, 331–354, 370–396, 418–440, and 518–536; these read IFASHFGQLAIIFLWTSGNLFHVA, LYIGSIFLSFAATAFLFAGWLHLQ, LNHHLSGLFGVSSLAWTGHLIHVAI, MAHHHLAIAVLFIVAGHMY, LHFQLGLALASVGTICSLVAQHMY, ASLYTHHQYIAGFILCGAFAHGAIFFI, AIISHLSWVSLFLGFHTLGLYVH, and FLVHHAIALGLHTTTLILV. [4Fe-4S] cluster is bound by residues Cys-560 and Cys-569. 2 helical membrane-spanning segments follow: residues 576-597 and 644-666; these read AFYLAVFWMLNTIGWVTFYFHW and LSVWSWMFLFGHLIYATGFMFLI. Chlorophyll a-binding residues include His-655, Met-663, and Tyr-671. Trp-672 is a binding site for phylloquinone. A helical transmembrane segment spans residues 708-728; that stretch reads VVGLAHFSAGYILTYAAFLIA.

The protein belongs to the PsaA/PsaB family. The PsaA/B heterodimer binds the P700 chlorophyll special pair and subsequent electron acceptors. PSI consists of a core antenna complex that captures photons, and an electron transfer chain that converts photonic excitation into a charge separation. The eukaryotic PSI reaction center is composed of at least 11 subunits. The cofactor is P700 is a chlorophyll a/chlorophyll a' dimer, A0 is one or more chlorophyll a, A1 is one or both phylloquinones and FX is a shared 4Fe-4S iron-sulfur center..

It is found in the plastid. The protein localises to the chloroplast thylakoid membrane. It carries out the reaction reduced [plastocyanin] + hnu + oxidized [2Fe-2S]-[ferredoxin] = oxidized [plastocyanin] + reduced [2Fe-2S]-[ferredoxin]. In terms of biological role, psaA and PsaB bind P700, the primary electron donor of photosystem I (PSI), as well as the electron acceptors A0, A1 and FX. PSI is a plastocyanin/cytochrome c6-ferredoxin oxidoreductase, converting photonic excitation into a charge separation, which transfers an electron from the donor P700 chlorophyll pair to the spectroscopically characterized acceptors A0, A1, FX, FA and FB in turn. Oxidized P700 is reduced on the lumenal side of the thylakoid membrane by plastocyanin or cytochrome c6. The protein is Photosystem I P700 chlorophyll a apoprotein A2 of Tupiella akineta (Green alga).